Consider the following 83-residue polypeptide: Small ribosomal subunit protein uS15c (83 aa).

The protein belongs to the universal ribosomal protein uS15 family. Part of the 30S ribosomal subunit.

It localises to the plastid. The protein localises to the chloroplast. The chain is Small ribosomal subunit protein uS15c (rps15) from Fagopyrum esculentum subsp. ancestrale (Wild buckwheat).